Consider the following 243-residue polypeptide: 2-O-methyltransferase NoeI (243 aa).

The protein belongs to the FkbM methyltransferase family.

The protein resides in the cytoplasm. Required for 2-O-methylation of the fucosyl group of Nod factors. This Sinorhizobium fredii (strain NBRC 101917 / NGR234) protein is 2-O-methyltransferase NoeI (noeI).